Reading from the N-terminus, the 428-residue chain is Glutamyl-tRNA reductase (428 aa).

Residues 49–52 (TCNR), Ser109, 114–116 (EGQ), and Gln120 each bind substrate. The active-site Nucleophile is Cys50. 189 to 194 (GAGKMS) serves as a coordination point for NADP(+).

It belongs to the glutamyl-tRNA reductase family. In terms of assembly, homodimer.

It catalyses the reaction (S)-4-amino-5-oxopentanoate + tRNA(Glu) + NADP(+) = L-glutamyl-tRNA(Glu) + NADPH + H(+). Its pathway is porphyrin-containing compound metabolism; protoporphyrin-IX biosynthesis; 5-aminolevulinate from L-glutamyl-tRNA(Glu): step 1/2. The protein operates within porphyrin-containing compound metabolism; chlorophyll biosynthesis. In terms of biological role, catalyzes the NADPH-dependent reduction of glutamyl-tRNA(Glu) to glutamate 1-semialdehyde (GSA). This is Glutamyl-tRNA reductase from Trichormus variabilis (strain ATCC 29413 / PCC 7937) (Anabaena variabilis).